The chain runs to 150 residues: Group IIC secretory phospholipase A2 (150 aa).

An N-terminal signal peptide occupies residues 1 to 20 (MKGIAVFLVFIFCWTTSTLS). 8 disulfide bridges follow: cysteine 46–cysteine 143, cysteine 48–cysteine 64, cysteine 63–cysteine 121, cysteine 69–cysteine 150, cysteine 70–cysteine 114, cysteine 79–cysteine 107, cysteine 97–cysteine 112, and cysteine 99–cysteine 105. 3 residues coordinate Ca(2+): tyrosine 47, glycine 49, and glycine 51. The active site involves histidine 67. Position 68 (aspartate 68) interacts with Ca(2+). N-linked (GlcNAc...) asparagine glycosylation is present at asparagine 92. The active site involves aspartate 115.

The protein belongs to the phospholipase A2 family. It depends on Ca(2+) as a cofactor.

The protein resides in the secreted. The catalysed reaction is a 1,2-diacyl-sn-glycero-3-phosphocholine + H2O = a 1-acyl-sn-glycero-3-phosphocholine + a fatty acid + H(+). Its function is as follows. PA2 catalyzes the calcium-dependent hydrolysis of the 2-acyl groups in 3-sn-phosphoglycerides. This Rattus norvegicus (Rat) protein is Group IIC secretory phospholipase A2 (Pla2g2c).